A 570-amino-acid chain; its full sequence is Urease subunit alpha 1 (570 aa).

One can recognise a Urease domain in the interval 131–570; the sequence is GGIDTHVHFI…VPMAQRYFLF (440 aa). Residues H136, H138, and K219 each contribute to the Ni(2+) site. Position 219 is an N6-carboxylysine (K219). A substrate-binding site is contributed by H221. 2 residues coordinate Ni(2+): H248 and H274. Catalysis depends on H322, which acts as the Proton donor. D362 provides a ligand contact to Ni(2+).

The protein belongs to the metallo-dependent hydrolases superfamily. Urease alpha subunit family. Heterotrimer of UreA (gamma), UreB (beta) and UreC (alpha) subunits. Three heterotrimers associate to form the active enzyme. Ni cation serves as cofactor. Carboxylation allows a single lysine to coordinate two nickel ions.

The protein resides in the cytoplasm. The catalysed reaction is urea + 2 H2O + H(+) = hydrogencarbonate + 2 NH4(+). It participates in nitrogen metabolism; urea degradation; CO(2) and NH(3) from urea (urease route): step 1/1. The protein is Urease subunit alpha 1 of Brucella melitensis biotype 1 (strain ATCC 23456 / CCUG 17765 / NCTC 10094 / 16M).